We begin with the raw amino-acid sequence, 101 residues long: Small ribosomal subunit protein uS14 (101 aa).

It belongs to the universal ribosomal protein uS14 family. In terms of assembly, part of the 30S ribosomal subunit. Contacts proteins S3 and S10.

Its function is as follows. Binds 16S rRNA, required for the assembly of 30S particles and may also be responsible for determining the conformation of the 16S rRNA at the A site. This is Small ribosomal subunit protein uS14 from Leptothrix cholodnii (strain ATCC 51168 / LMG 8142 / SP-6) (Leptothrix discophora (strain SP-6)).